The chain runs to 460 residues: tRNA modification GTPase MnmE (460 aa).

(6S)-5-formyl-5,6,7,8-tetrahydrofolate is bound by residues arginine 26, glutamate 88, and arginine 127. Residues 222–381 form the TrmE-type G domain; sequence GLKVAIVGRP…LESAILSKVQ (160 aa). Asparagine 232 contacts K(+). Residues 232-237, 251-257, and 276-279 contribute to the GTP site; these read NVGKSS, TELPGTT, and DTAG. Serine 236 provides a ligand contact to Mg(2+). K(+) contacts are provided by threonine 251, leucine 253, and threonine 256. Threonine 257 is a binding site for Mg(2+). Residue lysine 460 coordinates (6S)-5-formyl-5,6,7,8-tetrahydrofolate.

Belongs to the TRAFAC class TrmE-Era-EngA-EngB-Septin-like GTPase superfamily. TrmE GTPase family. Homodimer. Heterotetramer of two MnmE and two MnmG subunits. It depends on K(+) as a cofactor.

The protein localises to the cytoplasm. Functionally, exhibits a very high intrinsic GTPase hydrolysis rate. Involved in the addition of a carboxymethylaminomethyl (cmnm) group at the wobble position (U34) of certain tRNAs, forming tRNA-cmnm(5)s(2)U34. The chain is tRNA modification GTPase MnmE from Cyanothece sp. (strain PCC 7425 / ATCC 29141).